The chain runs to 209 residues: Uracil phosphoribosyltransferase (209 aa).

5-phospho-alpha-D-ribose 1-diphosphate-binding positions include arginine 79, arginine 104, and 131–139; that span reads TPVVATANT. Uracil contacts are provided by residues isoleucine 194 and 199-201; that span reads GDA. Aspartate 200 provides a ligand contact to 5-phospho-alpha-D-ribose 1-diphosphate.

This sequence belongs to the UPRTase family. The cofactor is Mg(2+).

The enzyme catalyses UMP + diphosphate = 5-phospho-alpha-D-ribose 1-diphosphate + uracil. It functions in the pathway pyrimidine metabolism; UMP biosynthesis via salvage pathway; UMP from uracil: step 1/1. Allosterically activated by GTP. Its function is as follows. Catalyzes the conversion of uracil and 5-phospho-alpha-D-ribose 1-diphosphate (PRPP) to UMP and diphosphate. The sequence is that of Uracil phosphoribosyltransferase from Bradyrhizobium diazoefficiens (strain JCM 10833 / BCRC 13528 / IAM 13628 / NBRC 14792 / USDA 110).